The following is a 150-amino-acid chain: Ribonuclease H (150 aa).

An RNase H type-1 domain is found at 1–146 (MPELFAYTDG…ADELARAGMA (146 aa)). Mg(2+) is bound by residues aspartate 9, glutamate 52, aspartate 74, and aspartate 138.

This sequence belongs to the RNase H family. Monomer. The cofactor is Mg(2+).

It localises to the cytoplasm. The enzyme catalyses Endonucleolytic cleavage to 5'-phosphomonoester.. Endonuclease that specifically degrades the RNA of RNA-DNA hybrids. The chain is Ribonuclease H from Roseobacter denitrificans (strain ATCC 33942 / OCh 114) (Erythrobacter sp. (strain OCh 114)).